The chain runs to 661 residues: MKKILQLIKQRSITRKLLVSFLSILIIPVVILAIFAYQSASSSLDRQMMGSALENVQQLNEIINTSIGEKENSADYFSEWLTKEKYNAKSNASIAEKFSQYISINKDVESIYTSDTKGHFTRYPDLPMPSGYNPVERDWYKKAVANKGKVVITDPYKTASTNTMVVTIAQQTKDGSGVIAINMTIENLLKTTKKVNIGTQGYAFIMTKDKKVVAHPNEQSGTELKGDWLDKMLSADKGDFQYTMDGDKKKMAFDTNKLTGWKIGGTMYLDEIHEAAQPVLHLALIVLAAAIIIGIIVMTLIIRSITTPLKQLVGSSKRISEGDLTETIDIRSKDELGELGKSFNNMASSLRSLIHAIQDSVDNVAASSEELTASAAQTSKATEHITLAIEQFSNGNEKQNENIETAAEHIYQMNDGLTNMAQASEVITDSSVQSTEIASEGGKLVHQTVGQMNVIDKSVKEAEQVVRGLETKSKDITNILRVINGIADQTNLLALNAAIEAARAGEYGRGFSVVAEEVRKLAVQSADSAKEIEGLIIEIVKEINTSLGMFQSVNQEVQTGLDITDKTEMSFKRISEMTNQIAGELQNMSATVQQLSASSEEVSGASEHIASISKESSAHIQDIAASAEEQLASMEEISSSAETLSSMAEELRDMTKRFKIE.

The Cytoplasmic segment spans residues 1 to 16 (MKKILQLIKQRSITRK). Residues 17–37 (LLVSFLSILIIPVVILAIFAY) traverse the membrane as a helical segment. Residues 38–281 (QSASSSLDRQ…IHEAAQPVLH (244 aa)) are Extracellular-facing. The region spanning 152 to 228 (ITDPYKTAST…QSGTELKGDW (77 aa)) is the Cache domain. Residues 282–302 (LALIVLAAAIIIGIIVMTLII) traverse the membrane as a helical segment. One can recognise an HAMP domain in the interval 303–355 (RSITTPLKQLVGSSKRISEGDLTETIDIRSKDELGELGKSFNNMASSLRSLIH). Residues 303–661 (RSITTPLKQL…RDMTKRFKIE (359 aa)) are Cytoplasmic-facing. Position 370 is a glutamate methyl ester (Glu) (Glu370). The Methyl-accepting transducer domain occupies 374 to 610 (SAAQTSKATE…EVSGASEHIA (237 aa)). 2 positions are modified to deamidated glutamine: Gln593 and Gln594. Gln594 is subject to Glutamate methyl ester (Gln). Glutamate methyl ester (Glu) is present on residues Glu629 and Glu636.

Belongs to the methyl-accepting chemotaxis (MCP) protein family. As to quaternary structure, interacts with FloT. Deamidated by CheD on Gln-593 and Gln-594, producing glutamate residues. The glutamate residues are then methylated. Other additional sites are deamidated and methylated as well.

The protein resides in the cell membrane. It localises to the membrane raft. In terms of biological role, chemotactic-signal transducers respond to changes in the concentration of attractants and repellents in the environment, transduce a signal from the outside to the inside of the cell, and facilitate sensory adaptation through the variation of the level of methylation. All amino acids serve as attractants in B.subtilis, they appear to cause an increase in the turnover methyl groups, leading to methylation of an unidentified acceptor, while repellents have been shown to cause a decrease in methyl group turnover. The methyl groups are added by a methyltransferase and removed by a methylesterase. McpA is required for taxis towards glucose and alpha-methylglucoside. The protein is Methyl-accepting chemotaxis protein McpA (mcpA) of Bacillus subtilis (strain 168).